The chain runs to 113 residues: UPF0342 protein SZO_10960 (113 aa).

This sequence belongs to the UPF0342 family.

The sequence is that of UPF0342 protein SZO_10960 from Streptococcus equi subsp. zooepidemicus (strain H70).